We begin with the raw amino-acid sequence, 316 residues long: CD276 antigen (316 aa).

An N-terminal signal peptide occupies residues 1 to 28; the sequence is MLRGWGGPSVGVCVRTALGVLCLCLTGA. The Ig-like V-type domain maps to 29 to 139; that stretch reads VEVQVSEDPV…DSAAVSLQVA (111 aa). Residues 29–248 are Extracellular-facing; the sequence is VEVQVSEDPV…GQPLTFPPEA (220 aa). N-linked (GlcNAc...) asparagine glycosylation is found at asparagine 104, asparagine 189, and asparagine 215. The Ig-like C2-type domain occupies 145-238; the sequence is PSMTLEPNKD…QDAHGSVTIT (94 aa). An intrachain disulfide couples cysteine 165 to cysteine 220. The helical transmembrane segment at 249 to 269 threads the bilayer; that stretch reads LWVTVGLSVCLVVLLVALAFV. Over 270–316 the chain is Cytoplasmic; that stretch reads CWRKIKQSCEEENAGAEDQDGDGEGSKTALRPLKPSENKEDDGQEIA. The span at 280 to 292 shows a compositional bias: acidic residues; the sequence is EENAGAEDQDGDG. Residues 280–316 form a disordered region; that stretch reads EENAGAEDQDGDGEGSKTALRPLKPSENKEDDGQEIA.

The protein belongs to the immunoglobulin superfamily. BTN/MOG family. Interacts with TREML2 and this interaction enhances T-cell activation. Ubiquitous.

It is found in the membrane. In terms of biological role, modulates T-cell-mediated immune responses and the development of acute and chronic transplant rejection. Plays a positive regulatory role in bone formation and has a dual role in the bone-immune interface. Induces antitumor immunity as it activates both acquired and innate immunity leading to natural killer cell and CD8 T-cell dependent killing of tumor cells. The chain is CD276 antigen (Cd276) from Mus musculus (Mouse).